Here is a 562-residue protein sequence, read N- to C-terminus: Beta-hexosaminidase (562 aa).

An N-terminal signal peptide occupies residues 1 to 22; it reads MVLDKMIIFHLLLWLCNVVVHA. Residues Asn-38, Asn-52, Asn-111, Asn-337, Asn-382, Asn-396, and Asn-463 are each glycosylated (N-linked (GlcNAc...) asparagine).

This sequence belongs to the glycosyl hydrolase 20 family.

The enzyme catalyses Hydrolysis of terminal non-reducing N-acetyl-D-hexosamine residues in N-acetyl-beta-D-hexosaminides.. Functionally, has a broad substrate specificity. This Candida albicans (Yeast) protein is Beta-hexosaminidase (HEX1).